The sequence spans 658 residues: Heat shock protein homolog SSE1 (658 aa).

The span at 614 to 627 shows a compositional bias: basic and acidic residues; sequence KRKEEERKSKKENA. Residues 614-658 form a disordered region; the sequence is KRKEEERKSKKENAQEGTSSKPESKEESEAKEDNDEESDVASIDE. The span at 642–658 shows a compositional bias: acidic residues; the sequence is EAKEDNDEESDVASIDE.

This sequence belongs to the heat shock protein 70 family.

It localises to the cytoplasm. Functionally, required for normal growth at various temperatures. The polypeptide is Heat shock protein homolog SSE1 (SSE1) (Encephalitozoon cuniculi (strain GB-M1) (Microsporidian parasite)).